We begin with the raw amino-acid sequence, 131 residues long: C-type natriuretic peptide 1 (131 aa).

The first 22 residues, 1-22, serve as a signal peptide directing secretion; it reads MLYPALLCAALLLIAPLGHTEG. The propeptide occupies 23–109; the sequence is RTLHPSPDAI…KRAVMDRSRR (87 aa). The cysteines at positions 115 and 131 are disulfide-linked.

The protein belongs to the natriuretic peptide family. As to expression, expressed in brain and to a low extent in atrium.

Its subcellular location is the secreted. Its function is as follows. Exhibits natriuretic and vasodepressant activity. Has a cGMP-stimulating activity. This Oncorhynchus mykiss (Rainbow trout) protein is C-type natriuretic peptide 1.